Consider the following 377-residue polypeptide: MKNFILLAVSSILLVDLFPTHCGHNVDLSKAINLNGVNFNNVDASSLGAAHVGQSASRGRGLGENPDDEEGDAKKKKDGKKAEPKNPRENKLKQPGDRADGQPAGDRADGQPAGDRADGQPAGDRADGQPAGDRAAGQPAGDRADGQPAGDRADGQPAGDRADGQPAGDRADGQPAGDRAAGQPAGDRAAGQPAGDRADGQPAGDRAAGQPAGDRADGQPAGDRAAGQPAGDRADGQPAGDRAAGQPAGDRAAGQPAGDRAAGQAAGDRAAGQAAGGNAGGQGQNNEGANAPNEKSVKEYLDKVRATVGTEWTPCSVTCGVGVRVRRRVNAANKKPEDLTLNDLETDVCTMDKCAGIFNVVSNSLGLVILLVLALFN.

An N-terminal signal peptide occupies residues 1-22 (MKNFILLAVSSILLVDLFPTHC). A disordered region spans residues 51–294 (HVGQSASRGR…NNEGANAPNE (244 aa)). Basic and acidic residues predominate over residues 72–100 (DAKKKKDGKKAEPKNPRENKLKQPGDRAD). The segment at 80 to 88 (KKAEPKNPR) is required for the binding to heparan sulfate proteoglycans (HSPGs) on the surface of host hepatocytes. Positions 91–95 (KLKQP) are region I; contains the proteolytic cleavage site. 20 consecutive repeat copies span residues 95-103 (PGDRADGQP), 104-112 (AGDRADGQP), 113-121 (AGDRADGQP), 122-130 (AGDRADGQP), 131-139 (AGDRAAGQP), 140-148 (AGDRADGQP), 149-157 (AGDRADGQP), 158-166 (AGDRADGQP), 167-175 (AGDRADGQP), 176-184 (AGDRAAGQP), 185-193 (AGDRAAGQP), 194-202 (AGDRADGQP), 203-211 (AGDRAAGQP), 212-220 (AGDRADGQP), 221-229 (AGDRAAGQP), 230-238 (AGDRADGQP), 239-247 (AGDRAAGQP), 248-256 (AGDRAAGQP), 257-265 (AGDRAAGQA), and 266-274 (AGDRAAGQA). Positions 95-274 (PGDRADGQPA…AAGDRAAGQA (180 aa)) are 20 X 9 AA tandem repeats of [PA]-G-D-R-A-[DA]-G-Q-[PA]. A compositionally biased stretch (low complexity) spans 236-273 (GQPAGDRAAGQPAGDRAAGQPAGDRAAGQAAGDRAAGQ). Over residues 274-283 (AAGGNAGGQG) the composition is skewed to gly residues. Positions 284–293 (QNNEGANAPN) are enriched in low complexity. Positions 303-355 (KVRATVGTEWTPCSVTCGVGVRVRRRVNAANKKPEDLTLNDLETDVCTMDKCA) constitute a TSP type-1 domain. 2 disulfides stabilise this stretch: cysteine 315/cysteine 349 and cysteine 319/cysteine 354. O-linked (Fuc) threonine glycosylation occurs at threonine 318. Cysteine 354 carries the GPI-anchor amidated cysteine lipid modification. Positions 355–377 (AGIFNVVSNSLGLVILLVLALFN) are cleaved as a propeptide — removed in mature form.

This sequence belongs to the plasmodium circumsporozoite protein family. During host cell invasion, proteolytically cleaved at the cell membrane in the region I by a papain-like cysteine protease of parasite origin. Cleavage is triggered by the sporozoite contact with highly sulfated heparan sulfate proteoglycans (HSPGs) present on the host hepatocyte cell surface. Cleavage exposes the TSP type-1 (TSR) domain and is required for productive invasion of host hepatocytes but not for adhesion to the host cell membrane. Cleavage is dispensable for sporozoite development in the oocyst, motility and for traversal of host and vector cells. Post-translationally, O-glycosylated; maybe by POFUT2.

The protein localises to the cell membrane. It is found in the cytoplasm. In terms of biological role, essential sporozoite protein. In the mosquito vector, required for sporozoite development in the oocyst, migration through the vector hemolymph and entry into the vector salivary glands. In the vertebrate host, required for sporozoite migration through the host dermis and infection of host hepatocytes. Binds to highly sulfated heparan sulfate proteoglycans (HSPGs) on the surface of host hepatocytes. Its function is as follows. In the vertebrate host, binds to highly sulfated heparan sulfate proteoglycans (HSPGs) on the surface of host hepatocytes and is required for sporozoite invasion of the host hepatocytes. The sequence is that of Circumsporozoite protein from Plasmodium vivax (strain Salvador I).